A 295-amino-acid chain; its full sequence is Glucose-1-phosphate thymidylyltransferase (295 aa).

Mg(2+) is bound by residues D111 and D226.

This sequence belongs to the glucose-1-phosphate thymidylyltransferase family. In terms of assembly, homotetramer. The cofactor is Mg(2+).

The enzyme catalyses dTTP + alpha-D-glucose 1-phosphate + H(+) = dTDP-alpha-D-glucose + diphosphate. Its pathway is carbohydrate biosynthesis; dTDP-L-rhamnose biosynthesis. It functions in the pathway bacterial outer membrane biogenesis; LPS O-antigen biosynthesis. Catalyzes the formation of dTDP-glucose, from dTTP and glucose 1-phosphate, as well as its pyrophosphorolysis. The polypeptide is Glucose-1-phosphate thymidylyltransferase (rmlA) (Xanthomonas campestris pv. campestris (strain B100)).